The sequence spans 312 residues: Phospholipid phosphatase 3 (312 aa).

Topologically, residues 1–33 (MQSYKYDKAIVPESKNGGSPALNNNPRKGGSKR) are cytoplasmic. Ser19 is subject to Phosphoserine. Residues 34–54 (VLLICLDLFCLFMAALPFLII) form a helical membrane-spanning segment. Over 55–85 (ETSTIKPYRRGFYCNDESIKYPLKVSETIND) the chain is Extracellular. A helical membrane pass occupies residues 86 to 106 (AVLCAVGIVIAILAIITGEFY). The Cytoplasmic segment spans residues 107–123 (RIYYLKEKSRSTTQNPY). The short motif at 109–110 (YY) is the Dityrosine basolateral targeting motif element. The chain crosses the membrane as a helical span at residues 124 to 144 (VAALYKQVGCFLFGCAISQSF). Topologically, residues 145-194 (TDIAKVSIGRLRPHFLSVCDPDFSQINCSEGYIQNYRCRGEDSKVQEARK) are extracellular. A phosphatase sequence motif I region spans residues 149 to 157 (KVSIGRLRP). Asn171 is a glycosylation site (N-linked (GlcNAc...) asparagine). The Integrin-binding motif motif lies at 183-185 (RGE). Residues 195-215 (SFFSGHASFSMFTMLYLVLYL) traverse the membrane as a helical segment. A phosphatase sequence motif II region spans residues 197–200 (FSGH). His200 (proton donors) is an active-site residue. The Cytoplasmic segment spans residues 216 to 226 (QARFTWRGARL). A helical transmembrane segment spans residues 227 to 244 (LRPLLQFTLLMMAFYTGL). Residues 245-256 (SRVSDYKHHPSD) form a phosphatase sequence motif III region. Over 245-258 (SRVSDYKHHPSDVL) the chain is Extracellular. His252 functions as the Nucleophile in the catalytic mechanism. A helical membrane pass occupies residues 259–279 (AGFAQGALVACCIVFFVSDLF). The mediates interaction with CTNND1 stretch occupies residues 276–312 (SDLFKTKTSLSLPAPAIRREILSPVDIIDRNNHHNMV). Residues 280–312 (KTKTSLSLPAPAIRREILSPVDIIDRNNHHNMV) lie on the Cytoplasmic side of the membrane.

Belongs to the PA-phosphatase related phosphoesterase family. As to quaternary structure, forms functional homodimers and homooligomers that are not required for substrate recognition and catalytic activity. Can also form heterooligomers with other PLPP2 and PLPP3. Interacts with CTNND1; negatively regulates the PLPP3-mediated stabilization of beta-catenin/CTNNB1. In terms of processing, N-glycosylated. Contains high-mannose oligosaccharides. In terms of tissue distribution, detected in lung, cerebellum and heart atrium.

Its subcellular location is the cell membrane. It is found in the basolateral cell membrane. The protein localises to the endoplasmic reticulum membrane. The protein resides in the endoplasmic reticulum-Golgi intermediate compartment membrane. It localises to the golgi apparatus membrane. Its subcellular location is the golgi apparatus. It is found in the trans-Golgi network membrane. The protein localises to the membrane raft. The enzyme catalyses a 1,2-diacyl-sn-glycero-3-phosphate + H2O = a 1,2-diacyl-sn-glycerol + phosphate. The catalysed reaction is 1,2-dihexadecanoyl-sn-glycero-3-phosphate + H2O = 1,2-dihexadecanoyl-sn-glycerol + phosphate. It carries out the reaction 1,2-di-(9Z-octadecenoyl)-sn-glycero-3-phosphate + H2O = 1,2-di-(9Z-octadecenoyl)-sn-glycerol + phosphate. It catalyses the reaction a monoacyl-sn-glycero-3-phosphate + H2O = a monoacylglycerol + phosphate. The enzyme catalyses (9Z)-octadecenoyl-sn-glycero-3-phosphate + H2O = (9Z-octadecenoyl)-glycerol + phosphate. The catalysed reaction is sphing-4-enine 1-phosphate + H2O = sphing-4-enine + phosphate. It carries out the reaction an N-acylsphing-4-enine 1-phosphate + H2O = an N-acylsphing-4-enine + phosphate. It catalyses the reaction N-(octanoyl)-sphing-4-enine-1-phosphate + H2O = N-octanoylsphing-4-enine + phosphate. The enzyme catalyses N-(9Z-octadecenoyl)-ethanolamine phosphate + H2O = N-(9Z-octadecenoyl) ethanolamine + phosphate. The protein operates within lipid metabolism; phospholipid metabolism. With respect to regulation, magnesium-independent phospholipid phosphatase. Insensitive to N-ethylmaleimide. Magnesium-independent phospholipid phosphatase of the plasma membrane that catalyzes the dephosphorylation of a variety of glycerolipid and sphingolipid phosphate esters including phosphatidate/PA, lysophosphatidate/LPA, diacylglycerol pyrophosphate/DGPP, sphingosine 1-phosphate/S1P and ceramide 1-phosphate/C1P. Also acts on N-oleoyl ethanolamine phosphate/N-(9Z-octadecenoyl)-ethanolamine phosphate, a potential physiological compound. Has both an extracellular and an intracellular phosphatase activity, allowing the hydrolysis and the cellular uptake of these bioactive lipid mediators from the milieu, regulating signal transduction in different cellular processes. Through the dephosphorylation of extracellular sphingosine-1-phosphate and the regulation of its extra- and intracellular availability, plays a role in vascular homeostasis, regulating endothelial cell migration, adhesion, survival, proliferation and the production of pro-inflammatory cytokines. By maintaining the appropriate levels of this lipid in the cerebellum, also ensure its proper development and function. Through its intracellular lipid phosphatase activity may act in early compartments of the secretory pathway, regulating the formation of Golgi to endoplasmic reticulum retrograde transport carriers. Its function is as follows. Independently of this phosphatase activity may also function in the Wnt signaling pathway and the stabilization of beta-catenin/CTNNB1, thereby regulating cell proliferation, migration and differentiation in angiogenesis or yet in tumor growth. Also plays a role in integrin-mediated cell-cell adhesion in angiogenesis. This Mus musculus (Mouse) protein is Phospholipid phosphatase 3.